The following is a 583-amino-acid chain: Bifunctional dihydrofolate reductase-thymidylate synthase (583 aa).

A DHFR domain is found at 9-229; the sequence is DIYAICACCK…TTLDFVIYSK (221 aa). NADP(+) is bound at residue 36–42; sequence GLGNEGG. Position 51 (Asp51) interacts with substrate. NADP(+) is bound by residues 104–106 and 125–128; these read KAS and LSRT. 3 residues coordinate substrate: Ile165, Tyr171, and Thr186. 166–173 serves as a coordination point for NADP(+); sequence GGASVYKE. The interval 298-583 is thymidylate synthase; the sequence is HPEYQYLNII…HDKISMDMAA (286 aa). A dUMP-binding site is contributed by Arg320. Residue Cys465 is part of the active site. Residues His466, 484 to 488, Asn496, and 526 to 528 each bind dUMP; these read QRSCD and HVY.

In the N-terminal section; belongs to the dihydrofolate reductase family. This sequence in the C-terminal section; belongs to the thymidylate synthase family. As to quaternary structure, homodimer.

It carries out the reaction (6S)-5,6,7,8-tetrahydrofolate + NADP(+) = 7,8-dihydrofolate + NADPH + H(+). It catalyses the reaction dUMP + (6R)-5,10-methylene-5,6,7,8-tetrahydrofolate = 7,8-dihydrofolate + dTMP. Its pathway is cofactor biosynthesis; tetrahydrofolate biosynthesis; 5,6,7,8-tetrahydrofolate from 7,8-dihydrofolate: step 1/1. Bifunctional enzyme. Involved in de novo dTMP biosynthesis. Key enzyme in folate metabolism. Catalyzes an essential reaction for de novo glycine and purine synthesis, DNA precursor synthesis, and for the conversion of dUMP to dTMP. The protein is Bifunctional dihydrofolate reductase-thymidylate synthase of Plasmodium chabaudi.